We begin with the raw amino-acid sequence, 557 residues long: NADP-dependent malic enzyme (557 aa).

Y91 (proton donor) is an active-site residue. NADP(+) is bound at residue R144. The active-site Proton acceptor is the K162. Positions 234, 235, and 258 each coordinate a divalent metal cation. Residues D258, 290–307 (GAGEAALGIANLIVMAME), and N397 each bind NADP(+).

Belongs to the malic enzymes family. In terms of assembly, homotetramer. Mg(2+) is required as a cofactor. Mn(2+) serves as cofactor.

It localises to the cytoplasm. The catalysed reaction is (S)-malate + NADP(+) = pyruvate + CO2 + NADPH. It carries out the reaction oxaloacetate + H(+) = pyruvate + CO2. The chain is NADP-dependent malic enzyme (ME1) from Anas platyrhynchos (Mallard).